The sequence spans 203 residues: Urease accessory protein UreE (203 aa).

A compositionally biased stretch (basic and acidic residues) spans 170-190; it reads EHHGHSHSRSHDHDHDHDHQH. The tract at residues 170–203 is disordered; the sequence is EHHGHSHSRSHDHDHDHDHQHGPSCSHGHHHGHR.

This sequence belongs to the UreE family.

It localises to the cytoplasm. Involved in urease metallocenter assembly. Binds nickel. Probably functions as a nickel donor during metallocenter assembly. The polypeptide is Urease accessory protein UreE (Burkholderia pseudomallei (strain 1710b)).